The following is a 352-amino-acid chain: Chymopapain (352 aa).

A signal peptide spans 1-18; sequence MATMSSISKIIFLATCLI. The propeptide at 19–134 is activation peptide; sequence IHMGLSSADF…EDFTYKHVTN (116 aa). A glycan (N-linked (GlcNAc...) asparagine) is linked at Asn-86. Disulfide bonds link Cys-156–Cys-197, Cys-190–Cys-229, and Cys-287–Cys-338. Residue Cys-159 is part of the active site. Active-site residues include His-293 and Asn-313.

The protein belongs to the peptidase C1 family.

The enzyme catalyses Specificity similar to that of papain.. Cysteine proteinase with a high level of diversity in substrate specificity. In Carica papaya (Papaya), this protein is Chymopapain.